The chain runs to 198 residues: Transcription factor FapR (198 aa).

The MaoC-like domain occupies 102–167 (TRIARGHHLF…HGRTIVEVNS (66 aa)).

Belongs to the FapR family.

Transcriptional factor involved in regulation of membrane lipid biosynthesis by repressing genes involved in fatty acid and phospholipid metabolism. This Geobacillus kaustophilus (strain HTA426) protein is Transcription factor FapR.